The primary structure comprises 502 residues: MSIRAEEISALIKQQIENYESEIQVSDVGTVIQIGDGIARAHGLDNVMSGELVEFSNGVMGMALNLEENNVGIVILGPYTGIKEGDEVRRTGRIMEVPVGEALIGRVVNPLGQPVDGLGPIETTETRPIESPAPGVMDRKSVHEPLQTGIKAIDALVPIGRGQRELIIGDRQTGKTSIAIDTIINQKDQNMICIYVAIGQKESTVRTVVETLRKHGALDYTIVVTASASQPAPLLFLAPYAGVTMGEYFMYKGQHVLVVYDDLSKQAAAYRELSLLLRRPPGREAYPGDIFYLHSRLLERAAKLSDAKGGGSLTALPFVETQAGDISAYIPTNVISITDGQIFLQSDLFFSGVRPAINAGLSVSRVGGAAQIKAMKKVSGTLRLDLAAYRELEAFAQFGSDLDKATQAKLARGARTVEVLKQDLHAPIPVEKQVAIIYALTHGFLDDIPVEDIRRFEKEFFLWLDQNGQHLLEHIRTTKELPNEEDFNKAIEAFKKTFVVSQ.

The segment at 115–138 (VDGLGPIETTETRPIESPAPGVMD) is disordered. 169–176 (GDRQTGKT) serves as a coordination point for ATP.

This sequence belongs to the ATPase alpha/beta chains family. In terms of assembly, F-type ATPases have 2 components, CF(1) - the catalytic core - and CF(0) - the membrane proton channel. CF(1) has five subunits: alpha(3), beta(3), gamma(1), delta(1), epsilon(1). CF(0) has three main subunits: a(1), b(2) and c(9-12). The alpha and beta chains form an alternating ring which encloses part of the gamma chain. CF(1) is attached to CF(0) by a central stalk formed by the gamma and epsilon chains, while a peripheral stalk is formed by the delta and b chains.

Its subcellular location is the cell membrane. The enzyme catalyses ATP + H2O + 4 H(+)(in) = ADP + phosphate + 5 H(+)(out). In terms of biological role, produces ATP from ADP in the presence of a proton gradient across the membrane. The alpha chain is a regulatory subunit. This chain is ATP synthase subunit alpha, found in Geobacillus sp. (strain WCH70).